The chain runs to 272 residues: Probable proteasome subunit beta type-5 (272 aa).

Residues 1–61 (MNSIVSKYTQ…KHCLIKMNHG (61 aa)) constitute a propeptide, removed in mature form. Threonine 62 serves as the catalytic Nucleophile.

This sequence belongs to the peptidase T1B family. In terms of assembly, the 26S proteasome consists of a 20S proteasome core and two 19S regulatory subunits. The 20S proteasome core is composed of 28 subunits that are arranged in four stacked rings, resulting in a barrel-shaped structure. The two end rings are each formed by seven alpha subunits, and the two central rings are each formed by seven beta subunits. The catalytic chamber with the active sites is on the inside of the barrel.

Its subcellular location is the cytoplasm. It localises to the nucleus. The catalysed reaction is Cleavage of peptide bonds with very broad specificity.. The proteasome is a multicatalytic proteinase complex which is characterized by its ability to cleave peptides with Arg, Phe, Tyr, Leu, and Glu adjacent to the leaving group at neutral or slightly basic pH. The proteasome has an ATP-dependent proteolytic activity. This is Probable proteasome subunit beta type-5 (pts1) from Schizosaccharomyces pombe (strain 972 / ATCC 24843) (Fission yeast).